Here is a 215-residue protein sequence, read N- to C-terminus: Phosphoribosylglycinamide formyltransferase (215 aa).

Residues Arg74, Met99–Leu102, and Asn116 each bind (6R)-10-formyltetrahydrofolate. His118 acts as the Proton donor in catalysis.

It belongs to the GART family.

The enzyme catalyses N(1)-(5-phospho-beta-D-ribosyl)glycinamide + (6R)-10-formyltetrahydrofolate = N(2)-formyl-N(1)-(5-phospho-beta-D-ribosyl)glycinamide + (6S)-5,6,7,8-tetrahydrofolate + H(+). Its pathway is purine metabolism; IMP biosynthesis via de novo pathway; N(2)-formyl-N(1)-(5-phospho-D-ribosyl)glycinamide from N(1)-(5-phospho-D-ribosyl)glycinamide (10-formyl THF route): step 1/1. Functionally, catalyzes the transfer of a formyl group from 10-formyltetrahydrofolate to 5-phospho-ribosyl-glycinamide (GAR), producing 5-phospho-ribosyl-N-formylglycinamide (FGAR) and tetrahydrofolate. This is Phosphoribosylglycinamide formyltransferase from Mycobacterium tuberculosis (strain CDC 1551 / Oshkosh).